The chain runs to 370 residues: High affinity iron permease ftrA (370 aa).

The next 7 helical transmembrane spans lie at 5–25 (VFAV…SIIV), 52–72 (VWWG…GMIG), 88–108 (LWEG…GAAL), 148–168 (AMFL…VVFI), 179–199 (AFPL…YLLY), 206–226 (SLQI…AGLF), and 293–313 (YGSV…FVAM). Residues 335–370 (RKSAEPGNGEQDVEVSTIPSDLQTESKIPKSGASLV) are disordered. Residues 351–360 (TIPSDLQTES) are compositionally biased toward polar residues.

Belongs to the oxidase-dependent Fe transporter (OFeT) (TC 9.A.10.1) family.

Its subcellular location is the cell membrane. Functionally, high affinity iron permease; part of the reductive iron assimilatory system (RIA), a siderophore-independent high affinity iron uptake mechanism. This chain is High affinity iron permease ftrA, found in Aspergillus fumigatus (strain ATCC MYA-4609 / CBS 101355 / FGSC A1100 / Af293) (Neosartorya fumigata).